A 398-amino-acid polypeptide reads, in one-letter code: ATP-dependent RNA helicase eIF4A (398 aa).

The Q motif motif lies at 25-53 (DSFDTMNLKPELLRGVYAYGFERPSAIQQ). Residues 56 to 226 (IMPVIKGHDV…TKFMRDPVRI (171 aa)) enclose the Helicase ATP-binding domain. 69 to 76 (AQSGTGKT) is a binding site for ATP. The short motif at 174–177 (DEAD) is the DEAD box element. Residues 237–398 (GIKQFYIAVE…EMPMNVADLI (162 aa)) form the Helicase C-terminal domain.

This sequence belongs to the DEAD box helicase family. eIF4A subfamily. As to quaternary structure, component of the eIF4F complex, which composition varies with external and internal environmental conditions. It is composed of at least eIF4A, eIF4E and eIF4G.

It is found in the cytoplasm. The catalysed reaction is ATP + H2O = ADP + phosphate + H(+). In terms of biological role, ATP-dependent RNA helicase which is a subunit of the eIF4F complex involved in cap recognition and is required for mRNA binding to ribosome. In the current model of translation initiation, eIF4A unwinds RNA secondary structures in the 5'-UTR of mRNAs which is necessary to allow efficient binding of the small ribosomal subunit, and subsequent scanning for the initiator codon. The chain is ATP-dependent RNA helicase eIF4A (tif1) from Botryotinia fuckeliana (strain B05.10) (Noble rot fungus).